Consider the following 594-residue polypeptide: Cytoplasmic polyadenylation element-binding protein 2 (594 aa).

Over residues 72–90 (KEREKVDEEKEGVERREEN) the composition is skewed to basic and acidic residues. Disordered regions lie at residues 72 to 91 (KEREKVDEEKEGVERREENG) and 367 to 388 (GGGFNSGSGSGNGTKSDGSTSE). The segment covering 367–378 (GGGFNSGSGSGN) has biased composition (gly residues). The region spanning 458–540 (LVAFIGGVPR…KRVEIKPYFF (83 aa)) is the RRM domain.

Its function is as follows. Cytoplasmic polyadenylation element binding protein that binds to and regulates the translation of specific mRNAs. This chain is Cytoplasmic polyadenylation element-binding protein 2 (cpb-2), found in Caenorhabditis japonica.